Here is a 179-residue protein sequence, read N- to C-terminus: Large ribosomal subunit protein uL6 (179 aa).

The tract at residues 151–179 is disordered; sequence RKPEPYKGKGIKYDNEQIRRKAGKSGGKK. The span at 152–169 shows a compositional bias: basic and acidic residues; that stretch reads KPEPYKGKGIKYDNEQIR. A compositionally biased stretch (basic residues) spans 170–179; the sequence is RKAGKSGGKK.

The protein belongs to the universal ribosomal protein uL6 family. Part of the 50S ribosomal subunit.

This protein binds to the 23S rRNA, and is important in its secondary structure. It is located near the subunit interface in the base of the L7/L12 stalk, and near the tRNA binding site of the peptidyltransferase center. The sequence is that of Large ribosomal subunit protein uL6 from Nitratidesulfovibrio vulgaris (strain ATCC 29579 / DSM 644 / CCUG 34227 / NCIMB 8303 / VKM B-1760 / Hildenborough) (Desulfovibrio vulgaris).